Reading from the N-terminus, the 109-residue chain is ATP-dependent Clp protease adapter protein ClpS (109 aa).

Residues 1–20 (MAERKQGGQGNGVGSSVVTE) form a disordered region.

This sequence belongs to the ClpS family. As to quaternary structure, binds to the N-terminal domain of the chaperone ClpA.

Functionally, involved in the modulation of the specificity of the ClpAP-mediated ATP-dependent protein degradation. This is ATP-dependent Clp protease adapter protein ClpS from Caulobacter vibrioides (strain NA1000 / CB15N) (Caulobacter crescentus).